Reading from the N-terminus, the 869-residue chain is Iron-sulfur cluster assembly SufBD family protein ML0593 (869 aa).

The DOD-type homing endonuclease domain maps to 344-477; that stretch reads LLGLWLGDGH…VRQLAIGCGL (134 aa).

It belongs to the iron-sulfur cluster assembly SufBD family. In terms of processing, this protein undergoes a protein self splicing that involves a post-translational excision of the intervening region (intein) followed by peptide ligation.

The sequence is that of Iron-sulfur cluster assembly SufBD family protein ML0593 from Mycobacterium leprae (strain TN).